Reading from the N-terminus, the 251-residue chain is Imidazole glycerol phosphate synthase subunit HisF (251 aa).

Catalysis depends on residues D11 and D130.

This sequence belongs to the HisA/HisF family. Heterodimer of HisH and HisF.

The protein localises to the cytoplasm. The catalysed reaction is 5-[(5-phospho-1-deoxy-D-ribulos-1-ylimino)methylamino]-1-(5-phospho-beta-D-ribosyl)imidazole-4-carboxamide + L-glutamine = D-erythro-1-(imidazol-4-yl)glycerol 3-phosphate + 5-amino-1-(5-phospho-beta-D-ribosyl)imidazole-4-carboxamide + L-glutamate + H(+). It participates in amino-acid biosynthesis; L-histidine biosynthesis; L-histidine from 5-phospho-alpha-D-ribose 1-diphosphate: step 5/9. Its function is as follows. IGPS catalyzes the conversion of PRFAR and glutamine to IGP, AICAR and glutamate. The HisF subunit catalyzes the cyclization activity that produces IGP and AICAR from PRFAR using the ammonia provided by the HisH subunit. The protein is Imidazole glycerol phosphate synthase subunit HisF of Bacteroides thetaiotaomicron (strain ATCC 29148 / DSM 2079 / JCM 5827 / CCUG 10774 / NCTC 10582 / VPI-5482 / E50).